Reading from the N-terminus, the 88-residue chain is Small ribosomal subunit protein bS16c (88 aa).

The protein belongs to the bacterial ribosomal protein bS16 family.

It is found in the plastid. It localises to the chloroplast. The sequence is that of Small ribosomal subunit protein bS16c from Helianthus annuus (Common sunflower).